The chain runs to 417 residues: MFSKQDQIQGYDDALLAAINAEEQRQEDHIELIASENYTSKRVMQAQGSGLTNKYAEGYPGKRYYGGCEHVDKVEALAIERAKQLFGADYANVQPHSGSSANSEVYLALLQAGDTILGMSLAHGGHLTHGAKVSSSGKLYNAVQYGIDTRTGLIDYDEVERLAVEHKPKMIVAGFSAYSKTLDFPRFRQIADKVGALLFVDMAHVAGLVAAGLYPNPLPYADVVTTTTHKTLRGPRGGLILAKANEEIEKKLNAAVFPGAQGGPLMHVIAAKAVCFKEALEPGFKAYQQQVIDNAQAMAGVFIKRGYDVVSGGTDNHLFLVSLIRQGLTGKDADAALGRAHITVNKNAVPNDPQSPFVTSGLRIGTPAVTTRGFKVTQCTELAGWICDILDHLGDADVEANVARQVAALCADFPVYR.

Residues Leu121 and 125 to 127 (GHL) contribute to the (6S)-5,6,7,8-tetrahydrofolate site. Lys230 bears the N6-(pyridoxal phosphate)lysine mark. 355–357 (SPF) contributes to the (6S)-5,6,7,8-tetrahydrofolate binding site.

The protein belongs to the SHMT family. Homodimer. Requires pyridoxal 5'-phosphate as cofactor.

It localises to the cytoplasm. The catalysed reaction is (6R)-5,10-methylene-5,6,7,8-tetrahydrofolate + glycine + H2O = (6S)-5,6,7,8-tetrahydrofolate + L-serine. Its pathway is one-carbon metabolism; tetrahydrofolate interconversion. It functions in the pathway amino-acid biosynthesis; glycine biosynthesis; glycine from L-serine: step 1/1. Its function is as follows. Catalyzes the reversible interconversion of serine and glycine with tetrahydrofolate (THF) serving as the one-carbon carrier. This reaction serves as the major source of one-carbon groups required for the biosynthesis of purines, thymidylate, methionine, and other important biomolecules. Also exhibits THF-independent aldolase activity toward beta-hydroxyamino acids, producing glycine and aldehydes, via a retro-aldol mechanism. In Pseudomonas fluorescens (strain ATCC BAA-477 / NRRL B-23932 / Pf-5), this protein is Serine hydroxymethyltransferase 2.